A 715-amino-acid chain; its full sequence is Glycine--tRNA ligase beta subunit (715 aa).

It belongs to the class-II aminoacyl-tRNA synthetase family. Tetramer of two alpha and two beta subunits.

The protein localises to the cytoplasm. It carries out the reaction tRNA(Gly) + glycine + ATP = glycyl-tRNA(Gly) + AMP + diphosphate. In Nitrosomonas europaea (strain ATCC 19718 / CIP 103999 / KCTC 2705 / NBRC 14298), this protein is Glycine--tRNA ligase beta subunit.